Consider the following 206-residue polypeptide: TPR repeat-containing protein YrrB (206 aa).

TPR repeat units follow at residues 1–23 (MQEG…NKED), 24–57 (AIPY…DSSA), 59–91 (TAYY…GMEN), 93–125 (DLFY…NEND), 127–159 (EARF…DPGH), and 160–193 (ADAF…QPDH).

In terms of assembly, monomer.

Its function is as follows. Could be an interacting mediator in the complex formation among RNA sulfuration components, RNA processing components, and aminoacyl-tRNA synthetases. This is TPR repeat-containing protein YrrB (yrrB) from Bacillus subtilis (strain 168).